The sequence spans 143 residues: Large ribosomal subunit protein uL13 (143 aa).

The protein belongs to the universal ribosomal protein uL13 family. As to quaternary structure, part of the 50S ribosomal subunit.

In terms of biological role, this protein is one of the early assembly proteins of the 50S ribosomal subunit, although it is not seen to bind rRNA by itself. It is important during the early stages of 50S assembly. The chain is Large ribosomal subunit protein uL13 from Desulfitobacterium hafniense (strain Y51).